Consider the following 510-residue polypeptide: NAD(P)H-quinone oxidoreductase subunit 2 B, chloroplastic (510 aa).

12 consecutive transmembrane segments (helical) span residues Leu24 to Leu44, Trp59 to Trp79, Ile99 to Ile119, Met124 to Cys144, Leu149 to Tyr169, Tyr183 to Gly203, Ile229 to Phe249, Trp295 to Ile315, Met323 to Asp343, Tyr354 to Leu374, Ala395 to Phe415, and Leu418 to Leu438.

Belongs to the complex I subunit 2 family. NDH is composed of at least 16 different subunits, 5 of which are encoded in the nucleus.

The protein localises to the plastid. It localises to the chloroplast thylakoid membrane. It carries out the reaction a plastoquinone + NADH + (n+1) H(+)(in) = a plastoquinol + NAD(+) + n H(+)(out). The catalysed reaction is a plastoquinone + NADPH + (n+1) H(+)(in) = a plastoquinol + NADP(+) + n H(+)(out). NDH shuttles electrons from NAD(P)H:plastoquinone, via FMN and iron-sulfur (Fe-S) centers, to quinones in the photosynthetic chain and possibly in a chloroplast respiratory chain. The immediate electron acceptor for the enzyme in this species is believed to be plastoquinone. Couples the redox reaction to proton translocation, and thus conserves the redox energy in a proton gradient. The protein is NAD(P)H-quinone oxidoreductase subunit 2 B, chloroplastic of Lolium perenne (Perennial ryegrass).